Reading from the N-terminus, the 923-residue chain is Neuropilin-1 (923 aa).

Positions 1 to 21 are cleaved as a signal peptide; the sequence is MERGLPLLCAVLALVLAPAGA. Residues 22–856 are Extracellular-facing; it reads FRNDKCGDTI…PGNVLKTLDP (835 aa). Disulfide bonds link C27–C54, C82–C104, and C147–C173. CUB domains follow at residues 27–141 and 147–265; these read CGDT…YEIF and CSQN…YSVL. The N-linked (GlcNAc...) asparagine glycan is linked to N150. Ca(2+) contacts are provided by E195, D209, and D250. C206 and C228 form a disulfide bridge. N261, N300, and N522 each carry an N-linked (GlcNAc...) asparagine glycan. Cystine bridges form between C275/C424 and C431/C583. F5/8 type C domains lie at 275–424 and 431–583; these read CMEA…VYGC and CSGM…LLGC. A glycan (O-linked (Xyl...) (chondroitin sulfate) serine; alternate) is linked at S612. An O-linked (Xyl...) (heparan sulfate) serine; alternate glycan is attached at S612. The 167-residue stretch at 645 to 811 folds into the MAM domain; it reads TYGFNCEFGW…NHISQEDCAK (167 aa). A disordered region spans residues 820 to 845; it reads PEIKIDETGSTPGYEGEGEGDKNISR. The O-linked (Xyl...) (chondroitin sulfate) serine glycan is linked to S829. N842 carries N-linked (GlcNAc...) asparagine glycosylation. Residues 857–879 traverse the membrane as a helical segment; that stretch reads ILITIIAMSALGVLLGAVCGVVL. Residues 880–923 are Cytoplasmic-facing; the sequence is YCACWHNGMSERNLSALENYNFELVDGVKLKKDKLNTQSTYSEA. S894 is subject to Phosphoserine.

This sequence belongs to the neuropilin family. In terms of assembly, homodimer, and heterodimer with NRP2. Interacts with FER. Interacts with PLXNB1. Interacts with VEGFA. Interacts with ABCB8/MITOSUR in mitochondria. As to quaternary structure, (Microbial infection) Interacts with SARS coronavirus-2/SARS-CoV-2 spike protein S1 (via the CendR motif RRAR). The expression of isoforms 1 and 2 does not seem to overlap. Expressed in olfactory epithelium (at protein level). Expressed in fibroblasts (at protein level). Expressed by the blood vessels of different tissues. In the developing embryo it is found predominantly in the nervous system. In adult tissues, it is highly expressed in heart and placenta; moderately in lung, liver, skeletal muscle, kidney and pancreas; and low in adult brain. Expressed in the central nervous system, including olfactory related regions such as the olfactory tubercles and paraolfactory gyri. In terms of tissue distribution, the expression of isoforms 1 and 2 does not seem to overlap. Found in liver hepatocytes, kidney distal and proximal tubules.

Its subcellular location is the secreted. It is found in the mitochondrion membrane. It localises to the cell membrane. The protein localises to the cytoplasm. In terms of biological role, cell-surface receptor involved in the development of the cardiovascular system, in angiogenesis, in the formation of certain neuronal circuits and in organogenesis outside the nervous system. Mediates the chemorepulsant activity of semaphorins. Recognizes a C-end rule (CendR) motif R/KXXR/K on its ligands which causes cellular internalization and vascular leakage. It binds to semaphorin 3A, the PLGF-2 isoform of PGF, the VEGF165 isoform of VEGFA and VEGFB. Coexpression with KDR results in increased VEGF165 binding to KDR as well as increased chemotaxis. Regulates VEGF-induced angiogenesis. Binding to VEGFA initiates a signaling pathway needed for motor neuron axon guidance and cell body migration, including for the caudal migration of facial motor neurons from rhombomere 4 to rhombomere 6 during embryonic development. Regulates mitochondrial iron transport via interaction with ABCB8/MITOSUR. Its function is as follows. (Microbial infection) Acts as a host factor for human coronavirus SARS-CoV-2 infection. Recognizes and binds to CendR motif RRAR on SARS-CoV-2 spike protein S1 which enhances SARS-CoV-2 infection. Binds VEGF-165 and may inhibit its binding to cells. May induce apoptosis by sequestering VEGF-165. May bind as well various members of the semaphorin family. Its expression has an averse effect on blood vessel number and integrity. The chain is Neuropilin-1 from Homo sapiens (Human).